We begin with the raw amino-acid sequence, 151 residues long: Small ribosomal subunit protein uS19 (151 aa).

An N-acetylalanine modification is found at alanine 2.

This sequence belongs to the universal ribosomal protein uS19 family.

In terms of biological role, negatively regulates lifespan. This chain is Small ribosomal subunit protein uS19, found in Caenorhabditis elegans.